The sequence spans 148 residues: Large ribosomal subunit protein bL9 (148 aa).

The protein belongs to the bacterial ribosomal protein bL9 family.

Functionally, binds to the 23S rRNA. The sequence is that of Large ribosomal subunit protein bL9 from Salinispora tropica (strain ATCC BAA-916 / DSM 44818 / JCM 13857 / NBRC 105044 / CNB-440).